The primary structure comprises 375 residues: Alcohol dehydrogenase 1 (375 aa).

Ala1 bears the N-acetylalanine mark. 7 residues coordinate Zn(2+): Cys46, His68, Cys98, Cys101, Cys104, Cys112, and Cys175. NAD(+) contacts are provided by residues 200-205 (GLGGVG), Asp224, Lys229, 293-295 (VGL), and Arg370.

Belongs to the zinc-containing alcohol dehydrogenase family. Class-I subfamily. It depends on Zn(2+) as a cofactor.

The protein resides in the cytoplasm. The catalysed reaction is a primary alcohol + NAD(+) = an aldehyde + NADH + H(+). The enzyme catalyses a secondary alcohol + NAD(+) = a ketone + NADH + H(+). The protein is Alcohol dehydrogenase 1 of Pelophylax perezi (Perez's frog).